The following is a 445-amino-acid chain: Retrovirus-related Pol polyprotein from type-1 retrotransposable element R2 (445 aa).

A Reverse transcriptase domain is found at 1 to 114 (QPSVFNLVKW…LSRDDSLAKA (114 aa)). The nucleic acid-binding endonuclease stretch occupies residues 115–445 (MLASAGPAAE…GATPRQLIEY (331 aa)). Residues 380–389 (GPRPAHHHQP) are compositionally biased toward basic residues. Residues 380–445 (GPRPAHHHQP…GATPRQLIEY (66 aa)) are disordered. A compositionally biased stretch (polar residues) spans 396-405 (ATANTGTLQS).

It carries out the reaction DNA(n) + a 2'-deoxyribonucleoside 5'-triphosphate = DNA(n+1) + diphosphate. The protein is Retrovirus-related Pol polyprotein from type-1 retrotransposable element R2 of Popillia japonica (Japanese beetle).